We begin with the raw amino-acid sequence, 360 residues long: uncharacterized protein (360 aa).

Residues 11 to 40 (KEEVWDTNRCSGCGACVAVCPVNNLYFREE) form the 4Fe-4S ferredoxin-type domain.

This sequence belongs to the FrhB family.

This is an uncharacterized protein from Methanocaldococcus jannaschii (strain ATCC 43067 / DSM 2661 / JAL-1 / JCM 10045 / NBRC 100440) (Methanococcus jannaschii).